The chain runs to 4060 residues: Replicase polyprotein 1a (4060 aa).

One can recognise a CoV Nsp1 globular domain in the interval 2–109; it reads FYNQVTLAVA…DFDVVFGHGA (108 aa). Positions 112 to 358 constitute a CoV Nsp2 N-terminal domain; that stretch reads VVFVDKYMCG…NTLLSNQLRL (247 aa). Zn(2+) is bound by residues cysteine 245, cysteine 247, cysteine 264, and cysteine 265. Residues 245–265 are C4; it reads CNCGSESWSVGAWDGYLSSCC. The CoV Nsp2 middle domain maps to 388–778; that stretch reads YDDILTNNKP…LDVYNGFLET (391 aa). Positions 776 to 898 constitute a CoV Nsp2 C-terminal domain; the sequence is LETVCSVAYT…LPVAFTKLAG (123 aa). Residues 899–994 form the Ubiquitin-like 1 domain; sequence GKISFSDDVI…VMISQWPISN (96 aa). Residues 1021–1262 enclose the Peptidase C16 1 domain; it reads EVDIIEQPFE…EAGEVKPFAV (242 aa). The For PL1-PRO activity role is filled by cysteine 1062. Positions 1134, 1136, 1163, and 1165 each coordinate Zn(2+). Residues 1134–1165 form a C4-type 1 zinc finger; the sequence is CDCGKKFDDQVGCLFWIMPYTKLFQKGECCIC. Active-site for PL1-PRO activity residues include histidine 1212 and aspartate 1225. The 159-residue stretch at 1263-1421 folds into the Macro domain; it reads YKNVKFYLGD…AVLKFLDGLD (159 aa). Residues 1579 to 1633 form the Ubiquitin-like 2 domain; the sequence is NDNVVLKITEDGINVKDVVVESSKSLGKQLGVVSDGVDSFEGVLPINTDTVLSVA. Positions 1640–1886 constitute a Peptidase C16 2 domain; the sequence is AFYGFEKAAL…VPTIVSEKIS (247 aa). Cysteine 1678 acts as the For PL2-PRO activity in catalysis. Zn(2+)-binding residues include cysteine 1757, cysteine 1760, cysteine 1786, and histidine 1788. Residues 1757–1788 form a C4-type 2; atypical zinc finger; that stretch reads CDICKSTVVEVKSAIVCASVLKDGCDVGFCPH. Residues histidine 1836 and aspartate 1841 each act as for PL2-PRO activity in the active site. Helical transmembrane passes span 1903-1923 and 1968-1988; these read DFVMNNIVLFLTWLLSMFSLL and IVTLFKFLLLLYAIYALVFMI. The tract at residues 1903–2131 is HD1; it reads DFVMNNIVLF…LFVRHIIVGC (229 aa). In terms of domain architecture, 3Ecto spans 1983 to 2048; sequence ALVFMIVQFS…TSLVWKHIRD (66 aa). 2 disulfide bridges follow: cysteine 1999/cysteine 2026 and cysteine 2017/cysteine 2023. Helical transmembrane passes span 2050–2070, 2073–2093, and 2111–2131; these read ILISLQPFVILVILLIFGNMY, FGLLYFVAQFISTFGSFLGFH, and FLATFIVCKIVLFVRHIIVGC. Residues 2122-2212 form a Y1 region; it reads LFVRHIIVGC…VVKTAVQPTA (91 aa). Residues 2122–2461 form the CoV Nsp3 Y domain; sequence LFVRHIIVGC…PATSIVAKQG (340 aa). 8 residues coordinate Zn(2+): histidine 2126, cysteine 2131, cysteine 2136, cysteine 2139, cysteine 2172, histidine 2175, cysteine 2179, and cysteine 2182. The segment at 2126–2139 is ZF1; the sequence is HIIVGCNNADCVAC. Positions 2172-2182 are ZF2; it reads CNKHNFFCVNC. Positions 2213–2302 are Y2; that stretch reads PAYVIIDKVD…LVNSELLSTL (90 aa). The tract at residues 2213–2461 is coV-Y; the sequence is PAYVIIDKVD…PATSIVAKQG (249 aa). The interval 2303 to 2359 is Y3; that stretch reads SVDFNGVLHKAYVDVLCNSFFKELTANMSMAECKATLGLTVSDDDFVSAVANAHRYD. Residues 2360–2461 are Y4; the sequence is VLLSDLSFNN…PATSIVAKQG (102 aa). 5 helical membrane passes run 2468–2488, 2727–2747, 2752–2769, 2772–2792, and 2800–2820; these read YNFLWYVCLFVVALFIGVSFI, GHMLFNFLFAAFITFLCFLVT, VFGDLSYGVFTVVCATLI, ISYVVTQNLFFMLLYAILYFV, and AWIWHIAYIVAYFLLIPWWLL. Residues 2468 to 2820 are HD2; it reads YNFLWYVCLF…YFLLIPWWLL (353 aa). The Nsp4C domain occupies 2844-2939; sequence LFEGDKFIGT…PTISYNSTLQ (96 aa). The Peptidase C30 domain occupies 2940–3242; that stretch reads SGLKKMAQPS…VKQMYGVNLQ (303 aa). Catalysis depends on for 3CL-PRO activity residues histidine 2980 and cysteine 3083. Transmembrane regions (helical) follow at residues 3254–3274, 3279–3299, 3303–3323, 3342–3362, 3376–3396, 3397–3417, and 3442–3462; these read FLFSVFFTMFWAELFIYTNTI, VILTPIFCLLLFLSLVLTMFL, FLFLQVFLLPTVIATALYNCV, VLQMDVQGLVNVLVCLFVVFL, FTYVCSLIAVAYTYFYSGDFL, SLLVMFLCAISSDWYIGAIVF, and LVVYLICGYLVCTYWGILYWF. The segment at 3254–3462 is HD3; the sequence is FLFSVFFTMF…CTYWGILYWF (209 aa). A RdRp Nsp7 cofactor domain is found at 3522–3604; the sequence is SKLTDLKCTN…SYFDNSSTLQ (83 aa). In terms of domain architecture, RdRp Nsp8 cofactor spans 3605 to 3799; the sequence is SVASSFVSMP…LNCERVVKLQ (195 aa). A Nsp9 ssRNA-binding domain is found at 3800–3908; it reads NNEIMPGKLK…GFIGATIRLQ (109 aa). The ExoN/MTase coactivator domain occupies 3909-4047; it reads AGKQTELAVN…DRTTIQSVDI (139 aa). Zn(2+) contacts are provided by cysteine 3982, cysteine 3985, histidine 3991, cysteine 3998, cysteine 4024, cysteine 4027, cysteine 4035, and cysteine 4037. Zinc fingers lie at residues 3982–3998 and 4024–4037; these read CLYCRAHVPHPSMDGYC and CNVCGCWLGHGCAC.

It belongs to the coronaviruses polyprotein 1ab family. In terms of assembly, 3CL-PRO exists as monomer and homodimer. Eight copies of nsp7 and eight copies of nsp8 assemble to form a heterohexadecamer. Nsp9 is a dimer. Nsp10 forms a dodecamer. Post-translationally, specific enzymatic cleavages in vivo by its own proteases yield mature proteins. 3CL-PRO and PL-PRO proteinases are autocatalytically processed.

It is found in the host membrane. It localises to the host cytoplasm. The protein resides in the host perinuclear region. The catalysed reaction is Thiol-dependent hydrolysis of ester, thioester, amide, peptide and isopeptide bonds formed by the C-terminal Gly of ubiquitin (a 76-residue protein attached to proteins as an intracellular targeting signal).. Functionally, the papain-like proteinase 1 (PLP1) and papain-like proteinase 2 (PLP2) are responsible for the cleavages located at the N-terminus of the replicase polyprotein. In addition, PLP2 possesses a deubiquitinating/deISGylating activity and processes both 'Lys-48'- and 'Lys-63'-linked polyubiquitin chains from cellular substrates. PLP2 also antagonizes innate immune induction of type I interferon by blocking the nuclear translocation of host IRF-3. Its function is as follows. Responsible for the majority of cleavages as it cleaves the C-terminus of replicase polyprotein at 11 sites. Recognizes substrates containing the core sequence [ILMVF]-Q-|-[SGACN]. Inhibited by the substrate-analog Cbz-Val-Asn-Ser-Thr-Leu-Gln-CMK. Also contains an ADP-ribose-1''-phosphate (ADRP)-binding function. Nsp7-nsp8 hexadecamer may possibly confer processivity to the polymerase, maybe by binding to dsRNA or by producing primers utilized by the latter. In terms of biological role, nsp9 is a ssRNA-binding protein. The sequence is that of Replicase polyprotein 1a from Homo sapiens (Human).